The sequence spans 498 residues: Probable malate:quinone oxidoreductase (498 aa).

Belongs to the MQO family. FAD is required as a cofactor.

The enzyme catalyses (S)-malate + a quinone = a quinol + oxaloacetate. Its pathway is carbohydrate metabolism; tricarboxylic acid cycle; oxaloacetate from (S)-malate (quinone route): step 1/1. The polypeptide is Probable malate:quinone oxidoreductase (Prochlorococcus marinus (strain AS9601)).